A 1087-amino-acid polypeptide reads, in one-letter code: Alpha-mannosidase G (1087 aa).

Zn(2+) is bound by residues H264, D266, D376, and H579. The active-site Nucleophile is D376.

This sequence belongs to the glycosyl hydrolase 38 family. It depends on Zn(2+) as a cofactor.

It carries out the reaction Hydrolysis of terminal, non-reducing alpha-D-mannose residues in alpha-D-mannosides.. In Dictyostelium discoideum (Social amoeba), this protein is Alpha-mannosidase G (manG).